The primary structure comprises 339 residues: Undecaprenyl-phosphate 4-deoxy-4-formamido-L-arabinose transferase (339 aa).

2 helical membrane-spanning segments follow: residues 235–255 (LSLV…FLLV) and 269–289 (LFVL…GMGL).

It belongs to the glycosyltransferase 2 family.

It is found in the cell inner membrane. The catalysed reaction is UDP-4-deoxy-4-formamido-beta-L-arabinose + di-trans,octa-cis-undecaprenyl phosphate = 4-deoxy-4-formamido-alpha-L-arabinopyranosyl di-trans,octa-cis-undecaprenyl phosphate + UDP. It participates in glycolipid biosynthesis; 4-amino-4-deoxy-alpha-L-arabinose undecaprenyl phosphate biosynthesis; 4-amino-4-deoxy-alpha-L-arabinose undecaprenyl phosphate from UDP-4-deoxy-4-formamido-beta-L-arabinose and undecaprenyl phosphate: step 1/2. Its pathway is bacterial outer membrane biogenesis; lipopolysaccharide biosynthesis. In terms of biological role, catalyzes the transfer of 4-deoxy-4-formamido-L-arabinose from UDP to undecaprenyl phosphate. The modified arabinose is attached to lipid A and is required for resistance to polymyxin and cationic antimicrobial peptides. The protein is Undecaprenyl-phosphate 4-deoxy-4-formamido-L-arabinose transferase of Pseudomonas paraeruginosa (strain DSM 24068 / PA7) (Pseudomonas aeruginosa (strain PA7)).